The following is a 245-amino-acid chain: Type I iodothyronine deiodinase (245 aa).

Topologically, residues 1–9 are extracellular; that stretch reads LSIRVLLHK. A helical; Signal-anchor for type III membrane protein membrane pass occupies residues 10–30; the sequence is LLILLQVTLSVVVGKTMMILF. Residues 31-245 are Cytoplasmic-facing; sequence PDTTKRYILK…EIRAVLEKLK (215 aa). Residue U123 is part of the active site. Position 123 (U123) is a non-standard amino acid, selenocysteine.

This sequence belongs to the iodothyronine deiodinase family. Predominantly monomer. Can form homodimers but homodimerization is not essential for enzyme activity.

Its subcellular location is the cell membrane. It localises to the endoplasmic reticulum membrane. It is found in the basolateral cell membrane. It carries out the reaction 3,3',5-triiodo-L-thyronine + iodide + A + H(+) = L-thyroxine + AH2. It catalyses the reaction 3,3',5'-triiodo-L-thyronine + iodide + A + H(+) = L-thyroxine + AH2. The enzyme catalyses 3,3'-diiodo-L-thyronine + iodide + A + H(+) = 3,3',5'-triiodo-L-thyronine + AH2. The catalysed reaction is 3,3'-diiodo-L-thyronine + iodide + A + H(+) = 3,3',5-triiodo-L-thyronine + AH2. It carries out the reaction 3'-iodo-L-thyronine + iodide + A + H(+) = 3',5'-diiodo-L-thyronine + AH2. It catalyses the reaction 3-iodo-L-thyronine + iodide + A + H(+) = 3,5-diiodo-L-thyronine + AH2. The enzyme catalyses 3-iodo-L-thyronine + iodide + A + H(+) = 3,3'-diiodo-L-thyronine + AH2. The catalysed reaction is 3,3'-diiodothyronamine + iodide + A + H(+) = 3,3',5'-triiodothyronamine + AH2. It carries out the reaction 3'-iodothyronamine + iodide + A + H(+) = 3',5'-diiodothyronamine + AH2. It catalyses the reaction 3-iodothyronamine + iodide + A + H(+) = 3,3'-diiodothyronamine + AH2. The enzyme catalyses 3,3'-diiodothyronamine + iodide + A + H(+) = 3,3',5-triiodothyronamine + AH2. The catalysed reaction is 3-iodothyronamine + iodide + A + H(+) = 3,5-diiodothyronamine + AH2. It carries out the reaction 3,3'-diiodo-L-thyronine sulfate + iodide + A + H(+) = 3,3',5'-triiodo-L-thyronine sulfate + AH2. It catalyses the reaction 3,3',5'-triiodo-L-thyronine sulfate + iodide + A + H(+) = L-thyroxine sulfate + AH2. The enzyme catalyses 3,3'-diiodo-L-thyronine sulfate + iodide + A + H(+) = 3,3',5-triiodo-L-thyronine sulfate + AH2. Plays a crucial role in the metabolism of thyroid hormones (TH) and has specific roles in TH activation and inactivation by deiodination. Catalyzes the deiodiantion of L-thyroxine (T4) to 3,5,3'-triiodothyronine (T3) and 3,3',5'-triiodothyronine (rT3) to 3,3'-diiodothyronine (3,3'-T2) via outer-ring deiodination (ORD). Catalyzes the deiodiantion of T4 to rT3, T3 to 3,3'-T2, 3,5-diiodothyronine (3,5-T2) to 3-monoiodothyronine (3-T1) and 3,3'-T2 to 3-T1 via inner-ring deiodination (IRD). Catalyzes the deiodiantion of 3',5'-diiodothyronine (3',5'-T2) to 3'-monoiodothyronine (3'-T1) via ORD. Catalyzes the phenolic ring deiodinations of 3,3',5'-triiodothyronamine, 3',5'-diiodothyronamine and 3,3'-diiodothyronamine as well as tyrosyl ring deiodinations of 3,5,3'-triiodothyronamine and 3,5-diiodothyronamine. Catalyzes the deiodination of L-thyroxine sulfate and 3,3',5-triiodo-L-thyronine sulfate via IRD and of 3,3',5'-triiodo-L-thyronine sulfate via ORD. The sequence is that of Type I iodothyronine deiodinase (DIO1) from Gallus gallus (Chicken).